We begin with the raw amino-acid sequence, 186 residues long: Peptidyl-tRNA hydrolase (186 aa).

Residue Tyr14 participates in tRNA binding. His19 functions as the Proton acceptor in the catalytic mechanism. 3 residues coordinate tRNA: Tyr61, Asn63, and Asn107.

It belongs to the PTH family. As to quaternary structure, monomer.

The protein localises to the cytoplasm. It carries out the reaction an N-acyl-L-alpha-aminoacyl-tRNA + H2O = an N-acyl-L-amino acid + a tRNA + H(+). Hydrolyzes ribosome-free peptidyl-tRNAs (with 1 or more amino acids incorporated), which drop off the ribosome during protein synthesis, or as a result of ribosome stalling. Its function is as follows. Catalyzes the release of premature peptidyl moieties from peptidyl-tRNA molecules trapped in stalled 50S ribosomal subunits, and thus maintains levels of free tRNAs and 50S ribosomes. The protein is Peptidyl-tRNA hydrolase of Helicobacter pylori (strain J99 / ATCC 700824) (Campylobacter pylori J99).